A 754-amino-acid chain; its full sequence is 1,4-alpha-glucan branching enzyme GlgB (754 aa).

Asp431 serves as the catalytic Nucleophile. The active-site Proton donor is the Glu484.

It belongs to the glycosyl hydrolase 13 family. GlgB subfamily. Monomer.

The catalysed reaction is Transfers a segment of a (1-&gt;4)-alpha-D-glucan chain to a primary hydroxy group in a similar glucan chain.. It participates in glycan biosynthesis; glycogen biosynthesis. Functionally, catalyzes the formation of the alpha-1,6-glucosidic linkages in glycogen by scission of a 1,4-alpha-linked oligosaccharide from growing alpha-1,4-glucan chains and the subsequent attachment of the oligosaccharide to the alpha-1,6 position. The polypeptide is 1,4-alpha-glucan branching enzyme GlgB (Prochlorococcus marinus subsp. pastoris (strain CCMP1986 / NIES-2087 / MED4)).